The sequence spans 405 residues: Squamosa promoter-binding-like protein 6 (405 aa).

An SBP-type zinc finger spans residues Asn-121–Pro-198. Cys-124, Cys-129, Cys-146, His-149, Cys-165, Cys-168, His-172, and Cys-184 together coordinate Zn(2+). Positions Lys-181–Lys-197 match the Bipartite nuclear localization signal motif.

Zn(2+) is required as a cofactor.

It is found in the nucleus. Its function is as follows. Trans-acting factor that binds specifically to the consensus nucleotide sequence 5'-TNCGTACAA-3'. The protein is Squamosa promoter-binding-like protein 6 (SPL6) of Arabidopsis thaliana (Mouse-ear cress).